Reading from the N-terminus, the 121-residue chain is Small ribosomal subunit protein uS13 (121 aa).

The disordered stretch occupies residues 94 to 121 (GLPVRGQNTKNNSRTRKGPRRTVANKKK). Residues 106–121 (SRTRKGPRRTVANKKK) are compositionally biased toward basic residues.

The protein belongs to the universal ribosomal protein uS13 family. As to quaternary structure, part of the 30S ribosomal subunit. Forms a loose heterodimer with protein S19. Forms two bridges to the 50S subunit in the 70S ribosome.

Its function is as follows. Located at the top of the head of the 30S subunit, it contacts several helices of the 16S rRNA. In the 70S ribosome it contacts the 23S rRNA (bridge B1a) and protein L5 of the 50S subunit (bridge B1b), connecting the 2 subunits; these bridges are implicated in subunit movement. Contacts the tRNAs in the A and P-sites. This Halalkalibacterium halodurans (strain ATCC BAA-125 / DSM 18197 / FERM 7344 / JCM 9153 / C-125) (Bacillus halodurans) protein is Small ribosomal subunit protein uS13.